The primary structure comprises 426 residues: Gamma-glutamyl phosphate reductase (426 aa).

This sequence belongs to the gamma-glutamyl phosphate reductase family.

The protein resides in the cytoplasm. The catalysed reaction is L-glutamate 5-semialdehyde + phosphate + NADP(+) = L-glutamyl 5-phosphate + NADPH + H(+). It functions in the pathway amino-acid biosynthesis; L-proline biosynthesis; L-glutamate 5-semialdehyde from L-glutamate: step 2/2. In terms of biological role, catalyzes the NADPH-dependent reduction of L-glutamate 5-phosphate into L-glutamate 5-semialdehyde and phosphate. The product spontaneously undergoes cyclization to form 1-pyrroline-5-carboxylate. The chain is Gamma-glutamyl phosphate reductase from Cupriavidus taiwanensis (strain DSM 17343 / BCRC 17206 / CCUG 44338 / CIP 107171 / LMG 19424 / R1) (Ralstonia taiwanensis (strain LMG 19424)).